Reading from the N-terminus, the 609-residue chain is UvrABC system protein C (609 aa).

The GIY-YIG domain occupies 13–91 (HQPGVYRMFD…IKAFQPRYNV (79 aa)). One can recognise a UVR domain in the interval 201–236 (QQVLEHLIKKMEQASMQLNFEQAAYFRDQIQAIRAV).

This sequence belongs to the UvrC family. Interacts with UvrB in an incision complex.

It is found in the cytoplasm. Functionally, the UvrABC repair system catalyzes the recognition and processing of DNA lesions. UvrC both incises the 5' and 3' sides of the lesion. The N-terminal half is responsible for the 3' incision and the C-terminal half is responsible for the 5' incision. This chain is UvrABC system protein C, found in Histophilus somni (strain 129Pt) (Haemophilus somnus).